Reading from the N-terminus, the 320-residue chain is NAC domain-containing protein 20 (320 aa).

One can recognise an NAC domain in the interval Leu14–Lys170. A DNA-binding region spans residues Ile114–Lys176.

Forms homodimers. Forms heterodimers with NAC26. Expressed in developing seeds.

Its subcellular location is the nucleus. The protein localises to the endoplasmic reticulum. Its function is as follows. Transcription factor that acts redundantly with NAC26 to regulate the expression of genes involved in the biosynthesis of starch and storage proteins in grain. Directly binds to the promoters of starch synthase 1 (SS1), pullulanase (PUL), glutelin A1 (GLUA1), glutelins B4 and B5 (GLUB4 and GLUB5), alpha-globulin and 16 kDa prolamin, and activates their expression. Possesses transactivation activity in yeast. This chain is NAC domain-containing protein 20, found in Oryza sativa subsp. indica (Rice).